We begin with the raw amino-acid sequence, 427 residues long: Trigger factor (427 aa).

Residues 163-248 (GDTVVIDFVG…VNEVKAKELP (86 aa)) enclose the PPIase FKBP-type domain.

This sequence belongs to the FKBP-type PPIase family. Tig subfamily.

The protein localises to the cytoplasm. It catalyses the reaction [protein]-peptidylproline (omega=180) = [protein]-peptidylproline (omega=0). In terms of biological role, involved in protein export. Acts as a chaperone by maintaining the newly synthesized protein in an open conformation. Functions as a peptidyl-prolyl cis-trans isomerase. This chain is Trigger factor, found in Lactococcus lactis subsp. cremoris (strain SK11).